Consider the following 240-residue polypeptide: MRCHYFVLLAVAAFLAGANVAVATTDAQLSDARAVRASFNTKRALRSHTKATDHGEERAYKPSLSVVESLNNWMQRASKNILPDDVILVMASKAMTKKTSSSDAVFAMLQLDQGLKGILSNPNLKQFAYYLVLTEKAPSQALITKLISQYGDDVVAKYLFDIKHKAINVSEKLKAEARFWQGAQYVKWFDEGVTPALVRQKYNVHPETWYKNPYEGVYWEYTGVYAKLASKSNKPLPVEV.

A signal peptide spans 1-23 (MRCHYFVLLAVAAFLAGANVAVA). The RxLR-dEER signature appears at 43 to 58 (RALRSHTKATDHGEER).

Belongs to the RxLR effector family.

It localises to the secreted. The protein resides in the host cytoplasm. The protein localises to the host nucleus. Its subcellular location is the host nucleolus. Its function is as follows. Effector that enhances P.infestans colonization of Nicotiana benthamiana leaves. The chain is RxLR effector protein PexRD20 from Phytophthora infestans (strain T30-4) (Potato late blight agent).